Reading from the N-terminus, the 122-residue chain is Hexon-interlacing protein (122 aa).

Residues 72–106 (VTELNESIDELQQKMTELEKRLKIMEEKIEEIKLA) are a coiled coil.

This sequence belongs to the adenoviridae hexon-interlacing protein family. In terms of assembly, homotrimer. Interacts with hexon protein; this interaction tethers the hexons together. Self-interacts with adjacent proteins. Interacts with kinesin light chain KLC1; this interaction leads to capsid disruption at the nuclear pore complex during virus entry into host cell.

It is found in the virion. The protein resides in the host nucleus. Functionally, structural component of the virion that acts as a cement protein on the capsid exterior and forms triskelion structures consisting of three molecules that stabilize three hexon trimers at the center of each icosahedral facet and fixes the peripentonal hexons. Dispensable for assembly. During virus entry, recruits the anterograde motor kinesin-1 to the capsid docked at the nuclear pore complex thereby subjecting the docked capsid to a pulling force. The resulting tension leads to capsid disruption, dispersion of capsid fragments toward cell periphery and eventually viral DNA entry into the host nucleus. The protein is Hexon-interlacing protein of Tupaiidae (tree shrews).